The primary structure comprises 143 residues: Transcription antitermination protein NusB (143 aa).

The protein belongs to the NusB family.

In terms of biological role, involved in transcription antitermination. Required for transcription of ribosomal RNA (rRNA) genes. Binds specifically to the boxA antiterminator sequence of the ribosomal RNA (rrn) operons. The protein is Transcription antitermination protein NusB of Buchnera aphidicola subsp. Acyrthosiphon pisum (strain 5A).